We begin with the raw amino-acid sequence, 711 residues long: Far upstream element-binding protein 2 (711 aa).

Positions 1–147 are disordered; that stretch reads MSDYSTGGPP…HPPPRTSMTE (147 aa). Serine 2 carries the N-acetylserine modification. Pro residues predominate over residues 8 to 17; that stretch reads GPPPGPPPPA. Composition is skewed to gly residues over residues 18–28 and 36–68; these read GGGGGAGGAGG and GAGD…GGPG. An Omega-N-methylarginine modification is found at arginine 40. Residue lysine 87 is modified to N6-acetyllysine. At serine 99 the chain carries Phosphoserine. Phosphothreonine is present on threonine 100. Positions 110 to 122 are enriched in basic and acidic residues; that stretch reads RQLEDGDQPESKK. A Glycyl lysine isopeptide (Lys-Gly) (interchain with G-Cter in SUMO1); alternate cross-link involves residue lysine 121. Lysine 121 participates in a covalent cross-link: Glycyl lysine isopeptide (Lys-Gly) (interchain with G-Cter in SUMO2); alternate. 7 positions are modified to phosphoserine: serine 125, serine 129, serine 131, serine 181, serine 184, serine 193, and serine 274. KH domains are found at residues 144 to 208, 233 to 299, and 322 to 386; these read SMTE…KMML, GTVQ…CEMV, and GGGI…ARII. Positions 392-429 are disordered; that stretch reads SLRSGPPGPPGGPGMPPGGRGRGRGQGNWGPPGGEMTF. Residues 397 to 407 are compositionally biased toward pro residues; sequence PPGPPGGPGMP. Residues 408 to 424 are compositionally biased toward gly residues; the sequence is PGGRGRGRGQGNWGPPG. Residues arginine 411, arginine 413, arginine 415, and arginine 442 each carry the omega-N-methylarginine modification. In terms of domain architecture, KH 4 spans 424-491; sequence GGEMTFSIPT…QQIDHAKQLI (68 aa). A Phosphoserine modification is found at serine 480. Residues 497–569 form a disordered region; it reads GPLCPVGPGP…HDPSKAAAAA (73 aa). 2 stretches are compositionally biased toward pro residues: residues 501–520 and 528–542; these read PVGP…PFNP and PGAP…PHQY. Repeat 1 spans residues 571 to 582; that stretch reads DPNAAWAAYYSH. Residues 571-684 form a 4 X 12 AA imperfect repeats region; the sequence is DPNAAWAAYY…SAAWAEYYRQ (114 aa). A disordered region spans residues 583-711; the sequence is YYQQPPGPVP…PTQQGQQQAQ (129 aa). Over residues 587-613 the composition is skewed to pro residues; sequence PPGPVPGPAPAPAAPPAQGEPPQPPPT. 3 consecutive repeat copies span residues 617-628, 643-654, and 673-684.

Belongs to the KHSRP family. As to quaternary structure, part of a ternary complex containing FUBP2, PTBP1, PTBP2 and HNRPH1. Interacts with PARN. Interacts with PQBP1. In terms of processing, phosphorylation at Ser-193 leads to the unfolding of the unstable KH domain 1, creating a site for 14-3-3 YWHAZ binding, which promotes nuclear localization and impairs the RNA degradation function. In terms of tissue distribution, detected in neural and non-neural cell lines.

The protein localises to the nucleus. It is found in the cytoplasm. In terms of biological role, binds to the dendritic targeting element and may play a role in mRNA trafficking. Part of a ternary complex that binds to the downstream control sequence (DCS) of the pre-mRNA. Mediates exon inclusion in transcripts that are subject to tissue-specific alternative splicing. May interact with single-stranded DNA from the far-upstream element (FUSE). May activate gene expression. Also involved in degradation of inherently unstable mRNAs that contain AU-rich elements (AREs) in their 3'-UTR, possibly by recruiting degradation machinery to ARE-containing mRNAs. This is Far upstream element-binding protein 2 (KHSRP) from Homo sapiens (Human).